The sequence spans 394 residues: Na(+)/H(+) antiporter NhaA (394 aa).

A run of 11 helical transmembrane segments spans residues 11 to 31, 59 to 79, 95 to 115, 125 to 145, 155 to 175, 177 to 197, 203 to 220, 254 to 274, 296 to 316, 328 to 348, and 365 to 385; these read LEAA…IFAN, LLMW…GMEV, IFPA…YWFI, GWAI…ALLS, FLLA…ALFF, HEMS…LVAM, TGLI…ASVL, ALAP…NAGV, LIIG…LLGI, IFAI…IAGL, and LGIL…LKIT.

This sequence belongs to the NhaA Na(+)/H(+) (TC 2.A.33) antiporter family.

The protein resides in the cell inner membrane. The catalysed reaction is Na(+)(in) + 2 H(+)(out) = Na(+)(out) + 2 H(+)(in). Na(+)/H(+) antiporter that extrudes sodium in exchange for external protons. In Actinobacillus pleuropneumoniae serotype 3 (strain JL03), this protein is Na(+)/H(+) antiporter NhaA.